The following is a 34-amino-acid chain: uncharacterized protein (34 aa).

This is an uncharacterized protein from Escherichia coli (Bacteriophage T4).